The chain runs to 227 residues: Protein lin-28 (227 aa).

Residues 1-17 (MSTVVSEGRNDGNNRYS) show a composition bias toward polar residues. A disordered region spans residues 1–27 (MSTVVSEGRNDGNNRYSPQDEVEDRLP). Residues 52 to 120 (RYFGSCKWFN…GREAYAVSGE (69 aa)) enclose the CSD domain. CCHC-type zinc fingers lie at residues 143 to 160 (RCFRCGKFATHKAKSCPN) and 166 to 183 (KVCYTCGSEEHVSSICPE). Zn(2+)-binding residues include Cys144, Cys147, His153, Cys158, Cys168, Cys171, His176, and Cys181. The segment at 181–227 (CPERRRKHRPEQVAAEEAEAARMAAEKSSPTTSDDDIREKNSNSSDE) is disordered.

Belongs to the lin-28 family. Component of a complex at least containing lep-2, lin-28 and the long non-coding RNA lep-5, which mediates the degradation of lin-28. In terms of processing, cleavage by caspase ced-3 during larval development probably induces lin-28 degradation.

It is found in the cytoplasm. Heterochronic protein which controls the choice of stage specific cell fates. Regulates the timing of the second larval stage events (L2 events) in the hypodermis. May negatively regulate the larval to adult transition via the suppression of the microRNA (miRNA) let-7 during L3. Through this regulatory role, controls the timing of the sexual maturation of the nervous system. Also has a role in the fox-1-sex-1-mediated determination of sexual fate. Plays a role in governing the developmental timing of male tail tip morphogenesis. Plays a role in controlling the seam cell number during larval stages. Plays a role in vulval development. In Caenorhabditis elegans, this protein is Protein lin-28.